Reading from the N-terminus, the 150-residue chain is Large ribosomal subunit protein bL9 (150 aa).

The protein belongs to the bacterial ribosomal protein bL9 family.

Its function is as follows. Binds to the 23S rRNA. The chain is Large ribosomal subunit protein bL9 from Janthinobacterium sp. (strain Marseille) (Minibacterium massiliensis).